The following is a 552-amino-acid chain: Dihydroxy-acid dehydratase (552 aa).

D78 provides a ligand contact to Mg(2+). C119 provides a ligand contact to [2Fe-2S] cluster. The Mg(2+) site is built by D120 and K121. K121 is subject to N6-carboxylysine. C190 is a binding site for [2Fe-2S] cluster. E441 is a Mg(2+) binding site. S467 acts as the Proton acceptor in catalysis.

Belongs to the IlvD/Edd family. Homodimer. [2Fe-2S] cluster serves as cofactor. The cofactor is Mg(2+).

The catalysed reaction is (2R)-2,3-dihydroxy-3-methylbutanoate = 3-methyl-2-oxobutanoate + H2O. The enzyme catalyses (2R,3R)-2,3-dihydroxy-3-methylpentanoate = (S)-3-methyl-2-oxopentanoate + H2O. It functions in the pathway amino-acid biosynthesis; L-isoleucine biosynthesis; L-isoleucine from 2-oxobutanoate: step 3/4. It participates in amino-acid biosynthesis; L-valine biosynthesis; L-valine from pyruvate: step 3/4. In terms of biological role, functions in the biosynthesis of branched-chain amino acids. Catalyzes the dehydration of (2R,3R)-2,3-dihydroxy-3-methylpentanoate (2,3-dihydroxy-3-methylvalerate) into 2-oxo-3-methylpentanoate (2-oxo-3-methylvalerate) and of (2R)-2,3-dihydroxy-3-methylbutanoate (2,3-dihydroxyisovalerate) into 2-oxo-3-methylbutanoate (2-oxoisovalerate), the penultimate precursor to L-isoleucine and L-valine, respectively. This is Dihydroxy-acid dehydratase from Ignicoccus hospitalis (strain KIN4/I / DSM 18386 / JCM 14125).